The primary structure comprises 375 residues: Serpin B5 (375 aa).

N133, N298, and N361 each carry an N-linked (GlcNAc...) asparagine glycan.

Belongs to the serpin family. Ov-serpin subfamily. As to quaternary structure, interacts with IRF6.

It localises to the secreted. The protein resides in the extracellular space. Its function is as follows. Tumor suppressor. It blocks the growth, invasion, and metastatic properties of mammary tumors. As it does not undergo the S (stressed) to R (relaxed) conformational transition characteristic of active serpins, it exhibits no serine protease inhibitory activity. This is Serpin B5 (Serpinb5) from Mus musculus (Mouse).